The sequence spans 85 residues: Translation initiation factor IF-1 1 (85 aa).

The S1-like domain occupies 1–72 (MAKEELIEMS…SKGRITFRHL (72 aa)).

This sequence belongs to the IF-1 family. In terms of assembly, component of the 30S ribosomal translation pre-initiation complex which assembles on the 30S ribosome in the order IF-2 and IF-3, IF-1 and N-formylmethionyl-tRNA(fMet); mRNA recruitment can occur at any time during PIC assembly.

It localises to the cytoplasm. In terms of biological role, one of the essential components for the initiation of protein synthesis. Stabilizes the binding of IF-2 and IF-3 on the 30S subunit to which N-formylmethionyl-tRNA(fMet) subsequently binds. Helps modulate mRNA selection, yielding the 30S pre-initiation complex (PIC). Upon addition of the 50S ribosomal subunit IF-1, IF-2 and IF-3 are released leaving the mature 70S translation initiation complex. This is Translation initiation factor IF-1 1 from Aromatoleum aromaticum (strain DSM 19018 / LMG 30748 / EbN1) (Azoarcus sp. (strain EbN1)).